The sequence spans 758 residues: 1-phosphatidylinositol 4,5-bisphosphate phosphodiesterase delta-4 (758 aa).

The region spanning 16–124 is the PH domain; it reads QLMQAGSPMR…WIQGLEKLIE (109 aa). Positions 26–53 are substrate binding; that stretch reads KVKSRSWKKQRYFKLQEDCMTIWYNSKK. EF-hand domains are found at residues 134–169, 170–205, and 206–237; these read LMDQ…MNVD, MSEH…LTQR, and DEVL…GQLE. 10 residues coordinate Ca(2+): Asp-147, Asn-149, Asp-151, Arg-153, Glu-158, Asp-183, Ser-185, Ser-187, Thr-189, and Glu-194. The short motif at 213–243 is the GBA element; that stretch reads QDFSKDGKKLTLLEFVDFLQQGQLEEENTEE. The PI-PLC X-box domain maps to 290-435; the sequence is QDMMQPLCHY…LRGKILLKGK (146 aa). His-305 is an active-site residue. Ca(2+)-binding residues include Asn-306, Glu-335, and Asp-337. Residue His-350 is part of the active site. Glu-384 contributes to the Ca(2+) binding site. Residues Lys-433 and Lys-435 each contribute to the substrate site. Over residues 446–468 the composition is skewed to acidic residues; the sequence is EQPDDSLGEVSDEEENIEVEEER. The disordered stretch occupies residues 446–479; sequence EQPDDSLGEVSDEEENIEVEEERNEDKKRAKKSK. Residues 486–602 enclose the PI-PLC Y-box domain; it reads LSDCVIYCKS…GYVLKPSFMR (117 aa). Residues Ser-515 and Arg-542 each coordinate substrate. Positions 602–731 constitute a C2 domain; the sequence is RHVETTFNPD…SGYRHIHLLS (130 aa). Residues Ile-645, Asp-647, Asn-671, Asp-700, Tyr-701, and Asp-702 each contribute to the Ca(2+) site. The PDZ-binding motif lies at 726–729; sequence HIHL.

Ca(2+) is required as a cofactor.

It is found in the membrane. The protein resides in the nucleus. The protein localises to the cytoplasm. It localises to the endoplasmic reticulum. It carries out the reaction a 1,2-diacyl-sn-glycero-3-phospho-(1D-myo-inositol-4,5-bisphosphate) + H2O = 1D-myo-inositol 1,4,5-trisphosphate + a 1,2-diacyl-sn-glycerol + H(+). The enzyme catalyses a 1,2-diacyl-sn-glycero-3-phospho-(1D-myo-inositol) + H2O = 1D-myo-inositol 1-phosphate + a 1,2-diacyl-sn-glycerol + H(+). In terms of biological role, hydrolyzes the phosphatidylinositol 4,5-bisphosphate (PIP2) to generate 2 second messenger molecules diacylglycerol (DAG) and inositol 1,4,5-trisphosphate (IP3). DAG mediates the activation of protein kinase C (PKC), while IP3 releases Ca(2+) from intracellular stores. The sequence is that of 1-phosphatidylinositol 4,5-bisphosphate phosphodiesterase delta-4 (plcd4) from Xenopus laevis (African clawed frog).